A 349-amino-acid chain; its full sequence is 3'-5' exoribonuclease 1 (349 aa).

2 stretches are compositionally biased toward basic and acidic residues: residues Met-1–Ala-10 and Pro-22–Pro-35. Residues Met-1–Thr-48 form a disordered region. Phosphoserine occurs at positions 59 and 62. In terms of domain architecture, SAP spans Ile-76–Tyr-110. Residues Ile-130–Ala-306 enclose the Exonuclease domain. Mg(2+) contacts are provided by Asp-134 and Glu-136. Residue Glu-136 is the Proton acceptor of the active site. Residues Glu-136 and Ala-137 each contribute to the AMP site. Asp-234 provides a ligand contact to Mg(2+). His-293 functions as the Proton acceptor in the catalytic mechanism. His-293 lines the AMP pocket. A Mg(2+)-binding site is contributed by Asp-298.

In terms of assembly, identified in a histone pre-mRNA complex, at least composed of ERI1, LSM11, SLBP, SNRPB, SYNCRIP and YBX1. Interacts in a cooperative manner with SLBP to the mature 3'-end of histone mRNAs. Binds to 40S and 60S ribosomal subunits and to 80S assembled ribosomes. Found in a ternary complex with SLBP and the stem-loop structure of the 3'-end of histone mRNAs. The cofactor is Mg(2+).

It localises to the cytoplasm. The protein resides in the nucleus. Its subcellular location is the nucleolus. The catalysed reaction is Exonucleolytic cleavage in the 3'- to 5'-direction to yield nucleoside 5'-phosphates.. Its activity is regulated as follows. Although it can bind simultaneously with SLBP to the 3'-end of histone mRNA, the presence of SLBP prevents the exonuclease activity. Its function is as follows. RNA exonuclease that binds to the 3'-end of histone mRNAs and degrades them, suggesting that it plays an essential role in histone mRNA decay after replication. A 2' and 3'-hydroxyl groups at the last nucleotide of the histone 3'-end is required for efficient 3'-end histone mRNA exonuclease activity and degradation of RNA substrates. Also able to degrade the 3'-overhangs of short interfering RNAs (siRNAs) in vitro, suggesting a possible role as regulator of RNA interference (RNAi). Required for binding the 5'-ACCCA-3' sequence present in stem-loop structure. Able to bind other mRNAs. Required for 5.8S rRNA 3'-end processing. Also binds to 5.8s ribosomal RNA. Binds with high affinity to the stem-loop structure of replication-dependent histone pre-mRNAs. In vitro, does not have sequence specificity. In vitro, has weak DNA exonuclease activity. In vitro, shows biphasic kinetics such that there is rapid hydrolysis of the last three unpaired RNA nucleotides in the 39 flanking sequence followed by a much slower cleavage through the stem that occurs over a longer incubation period in the order of hours. ERI1-mediated RNA metabolism plays a key role in chondrogenesis. This Homo sapiens (Human) protein is 3'-5' exoribonuclease 1.